Consider the following 1090-residue polypeptide: Protein unc-13 homolog D (1090 aa).

Residues 92–239 (EPEEHQQTLQ…FKEARKDKGQ (148 aa)) form the C2 1 domain. Ca(2+) is bound by residues Asp127 and Asp133. A Phosphoserine modification is found at Ser150. The Ca(2+) site is built by Asp206 and Asp208. Positions 240-543 (DDFLGNVVLR…AKRVQDHTTV (304 aa)) are interaction with RAB27A. The 121-residue stretch at 557–677 (FQLYISLKEL…RLALVYCSLI (121 aa)) folds into the MHD1 domain. The MHD2 domain occupies 788–895 (EDAILPLMKF…ASSRELIRKY (108 aa)). The region spanning 910 to 1035 (ELGAVTVKAS…PGLSGSEEPG (126 aa)) is the C2 2 domain. 6 residues coordinate Ca(2+): Leu940, Asp941, Asp947, Asp1005, Asp1007, and Asp1013. The tract at residues 1026 to 1048 (PGLSGSEEPGEVPQTRLPLTYPA) is disordered.

It belongs to the unc-13 family. Interacts with DOC2A. Interacts with RAB27A. Interacts with RHOG; the interaction increases RhoG affinity to the membrane lipids, targets UNC13D to membrane lipids and facilitates cytotoxic granule (CG) docking to the plasma membrane. Ca(2+) is required as a cofactor. As to expression, expressed at high levels in spleen, thymus and leukocytes. Also expressed in lung and placenta, and at very low levels in brain, heart, skeletal muscle and kidney. Expressed in cytotoxic T-lymphocytes (CTL) and mast cells.

Its subcellular location is the cytoplasm. The protein localises to the membrane. It is found in the late endosome. It localises to the recycling endosome. The protein resides in the lysosome. In terms of biological role, plays a role in cytotoxic granule exocytosis in lymphocytes. Required for both granule maturation and granule docking and priming at the immunologic synapse. Regulates assembly of recycling and late endosomal structures, leading to the formation of an endosomal exocytic compartment that fuses with perforin-containing granules at the immunologic synapse and licences them for exocytosis. Regulates Ca(2+)-dependent secretory lysosome exocytosis in mast cells. This is Protein unc-13 homolog D (UNC13D) from Homo sapiens (Human).